The following is a 1047-amino-acid chain: FACT complex subunit SPT16 (1047 aa).

An N-acetylalanine modification is found at A2. The residue at position 139 (K139) is an N6-acetyllysine. S188 carries the phosphoserine modification. Residues K196 and K223 each carry the N6-acetyllysine modification. Residues 432-507 (LKNEDEEEEE…GEQQIQKARK (76 aa)) adopt a coiled-coil conformation. Phosphoserine is present on S455. The tract at residues 492–518 (RLTEQKGEQQIQKARKSNVSYKNPSLM) is disordered. Residue K497 forms a Glycyl lysine isopeptide (Lys-Gly) (interchain with G-Cter in SUMO2) linkage. Residues 499–514 (EQQIQKARKSNVSYKN) show a composition bias toward polar residues. S508 is modified (phosphoserine). K513 is subject to N6-acetyllysine; alternate. Residue K513 forms a Glycyl lysine isopeptide (Lys-Gly) (interchain with G-Cter in SUMO2); alternate linkage. K647 is covalently cross-linked (Glycyl lysine isopeptide (Lys-Gly) (interchain with G-Cter in SUMO2)). Phosphoserine is present on residues S650 and S658. Residues K732 and K786 each carry the N6-acetyllysine modification. T903 carries the post-translational modification Phosphothreonine. At K904 the chain carries N6-acetyllysine. The disordered stretch occupies residues 918-1047 (EQGGWSFLEP…SSAPPKKKRK (130 aa)). The span at 927–973 (PEGEGSDAEEGDSESEIEDETFNPSEDDYEEEEEDSDEDYSSEAEES) shows a compositional bias: acidic residues. Phosphoserine is present on residues S979, S982, S986, and S1015. Over residues 985 to 1005 (ESGKDWDELEEEARKADRESR) the composition is skewed to basic and acidic residues. Low complexity predominate over residues 1024-1039 (VHSSGRGSNRGSRHSS).

It belongs to the peptidase M24 family. SPT16 subfamily. In terms of assembly, interacts with MYOG (via C-terminal region). Component of the FACT complex, a stable heterodimer of SSRP1 and SUPT16H. Also a component of a CK2-SPT16-SSRP1 complex which forms following UV irradiation, composed of SSRP1, SUPT16H, CSNK2A1, CSNK2A2 and CSNK2B. Interacts with NEK9. Binds to histone H2A-H2B. Identified in a centromere complex containing histones H2A, H2B and H4, and at least CENPA, CENPB, CENPC, CENPT, CENPN, HJURP, SUPT16H, SSRP1 and RSF1. Interacts with GTF2E2. As to quaternary structure, (Microbial infection) Interacts with Herpes simplex virus 1 (HHV-1) protein ICP22; this interaction relocalizes the FACT complex to viral genomes in infected cells. Post-translationally, ADP-ribosylated. ADP-ribosylation by PARP1 is induced by genotoxic stress and correlates with dissociation of FACT from chromatin. As to expression, ubiquitous.

Its subcellular location is the nucleus. The protein resides in the chromosome. Component of the FACT complex, a general chromatin factor that acts to reorganize nucleosomes. The FACT complex is involved in multiple processes that require DNA as a template such as mRNA elongation, DNA replication and DNA repair. During transcription elongation the FACT complex acts as a histone chaperone that both destabilizes and restores nucleosomal structure. It facilitates the passage of RNA polymerase II and transcription by promoting the dissociation of one histone H2A-H2B dimer from the nucleosome, then subsequently promotes the reestablishment of the nucleosome following the passage of RNA polymerase II. The FACT complex is probably also involved in phosphorylation of 'Ser-392' of p53/TP53 via its association with CK2 (casein kinase II). This chain is FACT complex subunit SPT16 (SUPT16H), found in Homo sapiens (Human).